The primary structure comprises 149 residues: Transcriptional repressor NrdR (149 aa).

Residues 3-34 (CPFCTAKDTKVIDSRLVGGGHQVRRRRECNDC) fold into a zinc finger. Residues 49 to 139 (PRVIKQDGSR…VYRSFEDIRE (91 aa)) enclose the ATP-cone domain.

The protein belongs to the NrdR family. Zn(2+) is required as a cofactor.

Functionally, negatively regulates transcription of bacterial ribonucleotide reductase nrd genes and operons by binding to NrdR-boxes. The polypeptide is Transcriptional repressor NrdR (Pseudoalteromonas translucida (strain TAC 125)).